Reading from the N-terminus, the 1121-residue chain is Brassinosteroid LRR receptor kinase BRI1 (1121 aa).

A signal peptide spans 1 to 24 (MDSLWAAIAALFVAAAVVVRGAAA). A Cys pair 1 motif is present at residues 54 to 61 (CRFPGAGC). LRR repeat units follow at residues 90–114 (LGSV…GGAR), 116–142 (GSKL…ALAS), 144–167 (CGGL…GGGG), 170–193 (FAGL…RWMV), 197–221 (VGAV…NCSG), 223–243 (QYLD…ALSD), 244–268 (CRGL…IAGL), 269–292 (TSLN…AFAK), 294–317 (QQLT…VASL), 318–341 (PELQ…LCQD), 343–367 (NSKL…VSNC), 369–391 (SLVS…LGDL), 392–415 (GNLQ…LSRI), 416–439 (QGLE…LAKC), 441–463 (KLNW…LGKL), 464–487 (SYLA…LGDC), and 489–511 (SLVW…LAKQ). A glycan (N-linked (GlcNAc...) asparagine) is linked at N102. An N-linked (GlcNAc...) asparagine glycan is attached at N151. N218 carries N-linked (GlcNAc...) asparagine glycosylation. N-linked (GlcNAc...) asparagine glycans are attached at residues N251, N275, N280, and N307. N-linked (GlcNAc...) asparagine glycosylation is found at N366 and N381. N-linked (GlcNAc...) asparagine glycans are attached at residues N473 and N501. Residue Y525 coordinates brassinolide. Residues 541-564 (GSLLEFTSIRPDDLSRMPSKKLCN) form an LRR 18 repeat. N564 carries an N-linked (GlcNAc...) asparagine glycan. Y569 provides a ligand contact to brassinolide. N580 carries an N-linked (GlcNAc...) asparagine glycan. 4 LRR repeats span residues 580 to 603 (NGSM…ELGD), 604 to 628 (MFYL…LAEA), 629 to 651 (KKLA…SFSA), and 652 to 676 (LSLS…SLAT). 3 N-linked (GlcNAc...) asparagine glycosylation sites follow: N658, N665, and N684. The short motif at 689-696 (CGFPLPPC) is the Cys pair 2 element. The tract at residues 693–712 (LPPCDHSSPRSSNDHQSHRR) is disordered. A helical membrane pass occupies residues 719-739 (SIAMGLLFSLFCIIVIIIAIG). Positions 807-1083 (FHIACQIGSG…LKVMAMFKEI (277 aa)) constitute a Protein kinase domain. ATP is bound by residues 813-821 (IGSGGFGDV), K835, 881-883 (DYM), 887-890 (SLED), 933-938 (DMKSSN), and D951. Catalysis depends on D933, which acts as the Proton acceptor.

This sequence belongs to the protein kinase superfamily. Ser/Thr protein kinase family. In terms of assembly, interacts with BIP103 and BIP131. Interacts with BAK1. Interacts with BSK3. Interacts with SERK2. Highly expressed in shoots. Expressed at low levels in roots.

It localises to the cell membrane. The enzyme catalyses L-seryl-[protein] + ATP = O-phospho-L-seryl-[protein] + ADP + H(+). The catalysed reaction is L-threonyl-[protein] + ATP = O-phospho-L-threonyl-[protein] + ADP + H(+). Functionally, receptor kinase involved brassinosteroid (BR) signal transduction. Regulates, in response to BR binding, a signaling cascade involved in plant development, promotion of cell elongation and flowering. Activates BR signaling by targeting and phosphorylating BSK3, a positive regulator of BR signaling. Forms at the plasma membrane a receptor complex with BAK1 which is activated in response to brassinolide. Phosphorylates BAK1. Phosphorylates REM4.1, which reduces REM4.1 binding affinity to BAK1 and allows the formation and subsequent activation of the BRI1-BAK1 receptor complex. Functions in various growth and developmental processes, such as internode elongation, bending of the lamina joint and skotomorphogenesis. Functions in internode elongation by inducing the formation of the intercalary meristem and the longitudinal elongation of internode cells. Involved in organ development through the control of cell division and elongation. Does not seem essential for organ pattern formation or organ initiation. In Oryza sativa subsp. japonica (Rice), this protein is Brassinosteroid LRR receptor kinase BRI1.